A 167-amino-acid polypeptide reads, in one-letter code: Insertion element IS1 4 protein InsB (167 aa).

It belongs to the transposase 27 family.

Absolutely required for transposition of IS1. The sequence is that of Insertion element IS1 4 protein InsB (insB4) from Escherichia coli (strain K12).